A 332-amino-acid chain; its full sequence is Glycerol-3-phosphate dehydrogenase [NAD(P)+] (332 aa).

Positions 11, 12, 32, and 106 each coordinate NADPH. Sn-glycerol 3-phosphate is bound by residues lysine 106, glycine 137, and serine 139. Residue alanine 141 participates in NADPH binding. Positions 192, 245, 255, 256, and 257 each coordinate sn-glycerol 3-phosphate. Residue lysine 192 is the Proton acceptor of the active site. Arginine 256 provides a ligand contact to NADPH. The NADPH site is built by valine 280 and glutamate 282.

It belongs to the NAD-dependent glycerol-3-phosphate dehydrogenase family.

Its subcellular location is the cytoplasm. The enzyme catalyses sn-glycerol 3-phosphate + NAD(+) = dihydroxyacetone phosphate + NADH + H(+). It carries out the reaction sn-glycerol 3-phosphate + NADP(+) = dihydroxyacetone phosphate + NADPH + H(+). It participates in membrane lipid metabolism; glycerophospholipid metabolism. Catalyzes the reduction of the glycolytic intermediate dihydroxyacetone phosphate (DHAP) to sn-glycerol 3-phosphate (G3P), the key precursor for phospholipid synthesis. The chain is Glycerol-3-phosphate dehydrogenase [NAD(P)+] from Macrococcus caseolyticus (strain JCSC5402) (Macrococcoides caseolyticum).